A 120-amino-acid chain; its full sequence is Large ribosomal subunit protein uL18 (120 aa).

This sequence belongs to the universal ribosomal protein uL18 family. As to quaternary structure, part of the 50S ribosomal subunit; part of the 5S rRNA/L5/L18/L25 subcomplex. Contacts the 5S and 23S rRNAs.

Its function is as follows. This is one of the proteins that bind and probably mediate the attachment of the 5S RNA into the large ribosomal subunit, where it forms part of the central protuberance. The sequence is that of Large ribosomal subunit protein uL18 from Picosynechococcus sp. (strain ATCC 27264 / PCC 7002 / PR-6) (Agmenellum quadruplicatum).